A 672-amino-acid chain; its full sequence is Beta-galactosidase BgaB (672 aa).

R109 lines the substrate pocket. C113 contributes to the Zn(2+) binding site. Residue N147 participates in substrate binding. The active-site Proton donor is E148. Positions 156, 158, and 161 each coordinate Zn(2+). The active-site Nucleophile is the E303. Substrate-binding positions include W311 and 351-354 (EKFH).

Belongs to the glycosyl hydrolase 42 family.

The catalysed reaction is Hydrolysis of terminal non-reducing beta-D-galactose residues in beta-D-galactosides.. This chain is Beta-galactosidase BgaB, found in Geobacillus sp. (strain Y412MC61).